The primary structure comprises 295 residues: Acetaldehyde dehydrogenase 2 (295 aa).

An NAD(+)-binding site is contributed by 17-20; sequence TGNI. Residue Cys-132 is the Acyl-thioester intermediate of the active site. NAD(+) contacts are provided by residues 164–172 and Asn-275; that span reads SVGPASRAN.

This sequence belongs to the acetaldehyde dehydrogenase family.

It catalyses the reaction acetaldehyde + NAD(+) + CoA = acetyl-CoA + NADH + H(+). The polypeptide is Acetaldehyde dehydrogenase 2 (Salinispora arenicola (strain CNS-205)).